The following is a 418-amino-acid chain: Putative ion-transport protein YfeO (418 aa).

A run of 12 helical transmembrane segments spans residues 10-30, 54-74, 99-119, 120-140, 149-169, 186-206, 223-243, 258-278, 300-320, 322-342, 343-363, and 371-391; these read LLLSLPAVAIGIASSLILIVV, DSPLWIIGVLTLTGIAVGLVI, ALPGLIVALILGLAGGVSLGP, EHPIMTVNIALAVAIGARLLP, ILASAGTIGALFGTPVAAALI, LFAPLMAAAAGALTTGLFFHP, ILSGAIVAAIAIAAGMVAVWC, VLVLGIGGFILGILGVIGGPV, DYFLLAVIKLAALVVAAASGF, GGRIFPAVFVGVALGLMLHEH, VPAVPAAITVSCAILGIVLVV, and LFMAAVVVPNTTLLPLLCIVM.

The protein belongs to the chloride channel (TC 2.A.49) family.

It is found in the cell membrane. This Escherichia coli O8 (strain IAI1) protein is Putative ion-transport protein YfeO.